A 334-amino-acid polypeptide reads, in one-letter code: Glycerol-3-phosphate dehydrogenase [NAD(P)+] (334 aa).

Residues W13, R33, and K106 each coordinate NADPH. 3 residues coordinate sn-glycerol 3-phosphate: K106, G137, and S139. A141 lines the NADPH pocket. Residues K192, D245, S255, R256, and N257 each contribute to the sn-glycerol 3-phosphate site. The active-site Proton acceptor is the K192. R256 lines the NADPH pocket. 2 residues coordinate NADPH: V280 and E282.

Belongs to the NAD-dependent glycerol-3-phosphate dehydrogenase family.

Its subcellular location is the cytoplasm. The enzyme catalyses sn-glycerol 3-phosphate + NAD(+) = dihydroxyacetone phosphate + NADH + H(+). The catalysed reaction is sn-glycerol 3-phosphate + NADP(+) = dihydroxyacetone phosphate + NADPH + H(+). It functions in the pathway membrane lipid metabolism; glycerophospholipid metabolism. Catalyzes the reduction of the glycolytic intermediate dihydroxyacetone phosphate (DHAP) to sn-glycerol 3-phosphate (G3P), the key precursor for phospholipid synthesis. This is Glycerol-3-phosphate dehydrogenase [NAD(P)+] from Chlamydia felis (strain Fe/C-56) (Chlamydophila felis).